A 544-amino-acid chain; its full sequence is Dihydrolipoyllysine-residue acetyltransferase component of pyruvate dehydrogenase complex (544 aa).

Lipoyl-binding domains follow at residues 1 to 76 (MYEF…VTID) and 113 to 188 (IYDF…VLIG). An N6-lipoyllysine mark is found at lysine 42 and lysine 154. The region spanning 242 to 279 (LASPVARKLASDLGVDIATIKGSGEQGRVMKDDVQNSK) is the Peripheral subunit-binding (PSBD) domain. Histidine 516 is an active-site residue.

It belongs to the 2-oxoacid dehydrogenase family. As to quaternary structure, forms a 24-polypeptide structural core with octahedral symmetry. (R)-lipoate is required as a cofactor.

It catalyses the reaction N(6)-[(R)-dihydrolipoyl]-L-lysyl-[protein] + acetyl-CoA = N(6)-[(R)-S(8)-acetyldihydrolipoyl]-L-lysyl-[protein] + CoA. In terms of biological role, the pyruvate dehydrogenase complex catalyzes the overall conversion of pyruvate to acetyl-CoA and CO(2). It contains multiple copies of three enzymatic components: pyruvate dehydrogenase (E1), dihydrolipoamide acetyltransferase (E2) and lipoamide dehydrogenase (E3). The sequence is that of Dihydrolipoyllysine-residue acetyltransferase component of pyruvate dehydrogenase complex (pdhC) from Acholeplasma laidlawii.